The chain runs to 304 residues: GTPase Era (304 aa).

The Era-type G domain occupies 11–179; that stretch reads YCGFIAIVGR…QKIVRKSLRE (169 aa). Residues 19–26 form a G1 region; it reads GRPNVGKS. 19 to 26 serves as a coordination point for GTP; sequence GRPNVGKS. Residues 45 to 49 are G2; sequence QTTRH. The interval 66-69 is G3; that stretch reads DTPG. Residues 66 to 70 and 128 to 131 each bind GTP; these read DTPGL and NKVD. Positions 128–131 are G4; the sequence is NKVD. A G5 region spans residues 158 to 160; the sequence is ISA. The KH type-2 domain maps to 210–287; the sequence is TGEELPYSVT…HLELWVKVKA (78 aa).

Belongs to the TRAFAC class TrmE-Era-EngA-EngB-Septin-like GTPase superfamily. Era GTPase family. Monomer.

It is found in the cytoplasm. Its subcellular location is the cell inner membrane. Functionally, an essential GTPase that binds both GDP and GTP, with rapid nucleotide exchange. Plays a role in 16S rRNA processing and 30S ribosomal subunit biogenesis and possibly also in cell cycle regulation and energy metabolism. In Actinobacillus pleuropneumoniae serotype 3 (strain JL03), this protein is GTPase Era.